A 480-amino-acid chain; its full sequence is tRNA-2-methylthio-N(6)-dimethylallyladenosine synthase (480 aa).

In terms of domain architecture, MTTase N-terminal spans Gly29 to Asn145. Residues Cys38, Cys74, Cys108, Cys180, Cys184, and Cys187 each contribute to the [4Fe-4S] cluster site. The 238-residue stretch at Arg166–Gln403 folds into the Radical SAM core domain. The region spanning Ser406–Glu474 is the TRAM domain.

Belongs to the methylthiotransferase family. MiaB subfamily. Monomer. [4Fe-4S] cluster is required as a cofactor.

Its subcellular location is the cytoplasm. The enzyme catalyses N(6)-dimethylallyladenosine(37) in tRNA + (sulfur carrier)-SH + AH2 + 2 S-adenosyl-L-methionine = 2-methylsulfanyl-N(6)-dimethylallyladenosine(37) in tRNA + (sulfur carrier)-H + 5'-deoxyadenosine + L-methionine + A + S-adenosyl-L-homocysteine + 2 H(+). In terms of biological role, catalyzes the methylthiolation of N6-(dimethylallyl)adenosine (i(6)A), leading to the formation of 2-methylthio-N6-(dimethylallyl)adenosine (ms(2)i(6)A) at position 37 in tRNAs that read codons beginning with uridine. The polypeptide is tRNA-2-methylthio-N(6)-dimethylallyladenosine synthase (Prochlorococcus marinus (strain MIT 9313)).